Here is a 158-residue protein sequence, read N- to C-terminus: Large ribosomal subunit protein uL30 (158 aa).

The protein belongs to the universal ribosomal protein uL30 family. In terms of assembly, part of the 50S ribosomal subunit.

This chain is Large ribosomal subunit protein uL30, found in Saccharolobus islandicus (strain Y.G.57.14 / Yellowstone #1) (Sulfolobus islandicus).